The primary structure comprises 184 residues: Ribosome-recycling factor (184 aa).

It belongs to the RRF family.

The protein resides in the cytoplasm. Responsible for the release of ribosomes from messenger RNA at the termination of protein biosynthesis. May increase the efficiency of translation by recycling ribosomes from one round of translation to another. The chain is Ribosome-recycling factor from Clostridium botulinum (strain Langeland / NCTC 10281 / Type F).